Reading from the N-terminus, the 197-residue chain is Thymidylate kinase (197 aa).

Residue 7–14 (GIDGSGKS) participates in ATP binding.

This sequence belongs to the thymidylate kinase family.

The enzyme catalyses dTMP + ATP = dTDP + ADP. Functionally, phosphorylation of dTMP to form dTDP in both de novo and salvage pathways of dTTP synthesis. This chain is Thymidylate kinase, found in Thermotoga sp. (strain RQ2).